We begin with the raw amino-acid sequence, 451 residues long: Phosphoglucosamine mutase (451 aa).

Ser-101 serves as the catalytic Phosphoserine intermediate. Mg(2+) is bound by residues Ser-101, Asp-240, Asp-242, and Asp-244. Phosphoserine is present on Ser-101.

It belongs to the phosphohexose mutase family. Requires Mg(2+) as cofactor. In terms of processing, activated by phosphorylation.

It catalyses the reaction alpha-D-glucosamine 1-phosphate = D-glucosamine 6-phosphate. Catalyzes the conversion of glucosamine-6-phosphate to glucosamine-1-phosphate. In Nitrosococcus oceani (strain ATCC 19707 / BCRC 17464 / JCM 30415 / NCIMB 11848 / C-107), this protein is Phosphoglucosamine mutase.